A 325-amino-acid chain; its full sequence is RNA ligase 1 (325 aa).

It depends on Mg(2+) as a cofactor. The cofactor is Mn(2+). Post-translationally, AMPylates itself (auto-AMPylation).

It catalyses the reaction ATP + (ribonucleotide)n-3'-hydroxyl + 5'-phospho-(ribonucleotide)m = (ribonucleotide)n+m + AMP + diphosphate.. Functions as an RNA ligase, in vitro. The ligation reaction entails three nucleotidyl transfer steps. In the first step, the RNA ligase reacts with ATP in the absence of nucleic acid to form a covalent ligase-AMP intermediate and release pyrophosphate. In step 2, the ligase-AMP binds to the nucleic acid and transfers the adenylate to the 5'-PO4 terminus to form an adenylylated intermediate. In step 3, the RNA ligase directs the attack of the 3'-OH on the 5'-phosphoanhydride linkage, resulting in a repaired 3'-5' phosphodiester and release of AMP. Exhibits selectivity for single-stranded RNA substrates and may not have nick-sealing activity on double-stranded DNA-RNA hybrids. May play a role in maintaining RNA integrity under stress conditions, for example in response to reactive oxygen species (ROS). In Pongo abelii (Sumatran orangutan), this protein is RNA ligase 1.